We begin with the raw amino-acid sequence, 458 residues long: Probable alpha-L-glutamate ligase (458 aa).

A unknown region spans residues 1–162 (MSDNKFIIGS…YGVKTAKKSG (162 aa)). The interval 163–458 (LKIGLLASNP…IEKKLGWKAD (296 aa)) is alpha-L-glutamate ligase. The ATP-grasp domain maps to 267 to 450 (LQLLQKNNLD…IAGAMIESIE (184 aa)). ATP contacts are provided by residues K304, 341 to 342 (EF), D350, and 374 to 376 (RAN). Residues D411, E423, and N425 each coordinate Mg(2+). Mn(2+) is bound by residues D411, E423, and N425.

It in the C-terminal section; belongs to the RimK family. It depends on Mg(2+) as a cofactor. Requires Mn(2+) as cofactor.

This is Probable alpha-L-glutamate ligase from Shewanella pealeana (strain ATCC 700345 / ANG-SQ1).